The sequence spans 28 residues: Cysteine-rich venom protein asurin-2 (28 aa).

Residues 1-15 (SNKKDYRKEIVDKHN) are compositionally biased toward basic and acidic residues. Residues 1-28 (SNKKDYRKEIVDKHNALSRSVKPTASNM) are disordered. A compositionally biased stretch (polar residues) spans 17–28 (LSRSVKPTASNM).

This sequence belongs to the CRISP family. In terms of processing, contains 8 disulfide bonds. Expressed by the venom gland.

The protein localises to the secreted. Its function is as follows. Blocks contraction of smooth muscle elicited by high potassium-induced depolarization, but does not block caffeine-stimulated contraction. May target voltage-gated calcium channels on smooth muscle. The sequence is that of Cysteine-rich venom protein asurin-2 from Austrelaps superbus (Lowland copperhead snake).